A 664-amino-acid polypeptide reads, in one-letter code: Glycine--tRNA ligase beta subunit (664 aa).

The protein belongs to the class-II aminoacyl-tRNA synthetase family. As to quaternary structure, tetramer of two alpha and two beta subunits.

Its subcellular location is the cytoplasm. The catalysed reaction is tRNA(Gly) + glycine + ATP = glycyl-tRNA(Gly) + AMP + diphosphate. This is Glycine--tRNA ligase beta subunit from Rickettsia felis (strain ATCC VR-1525 / URRWXCal2) (Rickettsia azadi).